Here is a 296-residue protein sequence, read N- to C-terminus: Elongation factor Ts (296 aa).

The involved in Mg(2+) ion dislocation from EF-Tu stretch occupies residues 79–82; the sequence is TDFV.

It belongs to the EF-Ts family.

The protein resides in the cytoplasm. Associates with the EF-Tu.GDP complex and induces the exchange of GDP to GTP. It remains bound to the aminoacyl-tRNA.EF-Tu.GTP complex up to the GTP hydrolysis stage on the ribosome. In Paracoccus denitrificans (strain Pd 1222), this protein is Elongation factor Ts.